The sequence spans 249 residues: Proteasome subunit alpha (249 aa).

This sequence belongs to the peptidase T1A family. In terms of assembly, the 20S proteasome core is composed of 14 alpha and 14 beta subunits that assemble into four stacked heptameric rings, resulting in a barrel-shaped structure. The two inner rings, each composed of seven catalytic beta subunits, are sandwiched by two outer rings, each composed of seven alpha subunits. The catalytic chamber with the active sites is on the inside of the barrel. Has a gated structure, the ends of the cylinder being occluded by the N-termini of the alpha-subunits. Is capped at one or both ends by the proteasome regulatory ATPase, PAN.

Its subcellular location is the cytoplasm. Its activity is regulated as follows. The formation of the proteasomal ATPase PAN-20S proteasome complex, via the docking of the C-termini of PAN into the intersubunit pockets in the alpha-rings, triggers opening of the gate for substrate entry. Interconversion between the open-gate and close-gate conformations leads to a dynamic regulation of the 20S proteasome proteolysis activity. Its function is as follows. Component of the proteasome core, a large protease complex with broad specificity involved in protein degradation. The polypeptide is Proteasome subunit alpha (Methanosarcina barkeri (strain Fusaro / DSM 804)).